The sequence spans 404 residues: Argininosuccinate synthase (404 aa).

9 to 17 (AYSGGLDTS) serves as a coordination point for ATP. Tyr-86 provides a ligand contact to L-citrulline. An ATP-binding site is contributed by Gly-116. L-aspartate-binding residues include Thr-118, Asn-122, and Asp-123. L-citrulline is bound at residue Asn-122. Arg-126, Ser-174, Ser-183, Glu-259, and Tyr-271 together coordinate L-citrulline.

This sequence belongs to the argininosuccinate synthase family. Type 1 subfamily. Homotetramer.

Its subcellular location is the cytoplasm. It catalyses the reaction L-citrulline + L-aspartate + ATP = 2-(N(omega)-L-arginino)succinate + AMP + diphosphate + H(+). The protein operates within amino-acid biosynthesis; L-arginine biosynthesis; L-arginine from L-ornithine and carbamoyl phosphate: step 2/3. The sequence is that of Argininosuccinate synthase from Listeria innocua serovar 6a (strain ATCC BAA-680 / CLIP 11262).